A 244-amino-acid polypeptide reads, in one-letter code: tRNA (guanine-N(7)-)-methyltransferase (244 aa).

S-adenosyl-L-methionine is bound by residues glutamate 75, glutamate 100, aspartate 127, and aspartate 150. Aspartate 150 is a catalytic residue. Substrate-binding positions include lysine 154, aspartate 186, and 223 to 226 (TRFE).

The protein belongs to the class I-like SAM-binding methyltransferase superfamily. TrmB family.

The catalysed reaction is guanosine(46) in tRNA + S-adenosyl-L-methionine = N(7)-methylguanosine(46) in tRNA + S-adenosyl-L-homocysteine. It participates in tRNA modification; N(7)-methylguanine-tRNA biosynthesis. In terms of biological role, catalyzes the formation of N(7)-methylguanine at position 46 (m7G46) in tRNA. This chain is tRNA (guanine-N(7)-)-methyltransferase, found in Xylella fastidiosa (strain 9a5c).